The sequence spans 198 residues: dITP/XTP pyrophosphatase (198 aa).

11–16 contributes to the substrate binding site; the sequence is THNPGK. The Mg(2+) site is built by Glu44 and Asp73. Asp73 (proton acceptor) is an active-site residue. Substrate contacts are provided by residues Ser74, 156-159, Lys179, and 184-185; these read FGYD and HR.

The protein belongs to the HAM1 NTPase family. As to quaternary structure, homodimer. Mg(2+) is required as a cofactor.

It carries out the reaction XTP + H2O = XMP + diphosphate + H(+). It catalyses the reaction dITP + H2O = dIMP + diphosphate + H(+). The enzyme catalyses ITP + H2O = IMP + diphosphate + H(+). Its function is as follows. Pyrophosphatase that catalyzes the hydrolysis of nucleoside triphosphates to their monophosphate derivatives, with a high preference for the non-canonical purine nucleotides XTP (xanthosine triphosphate), dITP (deoxyinosine triphosphate) and ITP. Seems to function as a house-cleaning enzyme that removes non-canonical purine nucleotides from the nucleotide pool, thus preventing their incorporation into DNA/RNA and avoiding chromosomal lesions. In Bacillus subtilis (strain 168), this protein is dITP/XTP pyrophosphatase (ysnA).